Reading from the N-terminus, the 238-residue chain is CD63 antigen (238 aa).

The Cytoplasmic segment spans residues 1–11; that stretch reads MAVEGGMKCVK. Residues 12 to 32 traverse the membrane as a helical segment; sequence FLLYVLLLAFCACAVGLIAVG. The Extracellular segment spans residues 33–51; sequence VGAQLVLSQTITHGATPGS. The chain crosses the membrane as a helical span at residues 52–72; sequence LLPVVIIAVGAFLFLVAFVGC. Residues 73-81 are Cytoplasmic-facing; that stretch reads CGTCKENYC. Residues 82–102 form a helical membrane-spanning segment; sequence LMITFAIFLSLIMLVEVAAAI. The Extracellular portion of the chain corresponds to 103-203; that stretch reads AGYVFRDKVM…KIGLWLRKNV (101 aa). N-linked (GlcNAc...) asparagine glycosylation is found at Asn125, Asn130, Asn150, and Asn172. Residues 204 to 224 form a helical membrane-spanning segment; that stretch reads LVVAAAALGIAFVEVLGIVFA. Residues 225-238 are Cytoplasmic-facing; that stretch reads CCLVKSIRSGYEVM. A Lysosomal targeting motif motif is present at residues 234 to 238; the sequence is GYEVM.

Belongs to the tetraspanin (TM4SF) family. In terms of assembly, interacts with TIMP1 and ITGB1 and recruits TIMP1 to ITGB1. Interacts with CD9. Identified in a complex with CD9 and ITGB3. Interacts with PMEL. Interacts with KDR/VEGFR2; identified in a complex with ITGB1 and KDR/VEGFR2 and is required to recruit KDR to ITGB1 complexes. Interacts with SYT7. Post-translationally, palmitoylated at a low, basal level in unstimulated platelets. The level of palmitoylation increases when platelets are activated by thrombin (in vitro).

The protein resides in the cell membrane. It localises to the lysosome membrane. It is found in the late endosome membrane. The protein localises to the endosome. Its subcellular location is the multivesicular body. The protein resides in the melanosome. It localises to the secreted. It is found in the extracellular exosome. The protein localises to the cell surface. Functionally, functions as a cell surface receptor for TIMP1 and plays a role in the activation of cellular signaling cascades. Plays a role in the activation of ITGB1 and integrin signaling, leading to the activation of AKT, FAK/PTK2 and MAP kinases. Promotes cell survival, reorganization of the actin cytoskeleton, cell adhesion, spreading and migration, via its role in the activation of AKT and FAK/PTK2. Plays a role in VEGFA signaling via its role in regulating the internalization of KDR/VEGFR2. Plays a role in intracellular vesicular transport processes, and is required for normal trafficking of the PMEL luminal domain that is essential for the development and maturation of melanocytes. Plays a role in the adhesion of leukocytes onto endothelial cells via its role in the regulation of SELP trafficking. May play a role in mast cell degranulation in response to Ms4a2/FceRI stimulation, but not in mast cell degranulation in response to other stimuli. The chain is CD63 antigen (CD63) from Oryctolagus cuniculus (Rabbit).